Reading from the N-terminus, the 111-residue chain is Photosystem II reaction center Psb28 protein (111 aa).

The protein belongs to the Psb28 family. Part of the photosystem II complex.

It is found in the cellular thylakoid membrane. The protein is Photosystem II reaction center Psb28 protein of Nostoc sp. (strain PCC 7120 / SAG 25.82 / UTEX 2576).